Reading from the N-terminus, the 232-residue chain is Large ribosomal subunit protein uL1 (232 aa).

It belongs to the universal ribosomal protein uL1 family. As to quaternary structure, part of the 50S ribosomal subunit.

Binds directly to 23S rRNA. The L1 stalk is quite mobile in the ribosome, and is involved in E site tRNA release. In terms of biological role, protein L1 is also a translational repressor protein, it controls the translation of the L11 operon by binding to its mRNA. The sequence is that of Large ribosomal subunit protein uL1 from Bacillus licheniformis (strain ATCC 14580 / DSM 13 / JCM 2505 / CCUG 7422 / NBRC 12200 / NCIMB 9375 / NCTC 10341 / NRRL NRS-1264 / Gibson 46).